A 284-amino-acid polypeptide reads, in one-letter code: Tropomyosin alpha-1 chain (284 aa).

Methionine 1 is modified (N-acetylmethionine). Residues 1 to 38 (MDAIKKKMQMLKLDKENALDRAEQAEADKKAAEDRSKQ) form a disordered region. Residues 1–284 (MDAIKKKMQM…DHALNDMTSI (284 aa)) are a coiled coil. Residues 12 to 38 (KLDKENALDRAEQAEADKKAAEDRSKQ) show a composition bias toward basic and acidic residues. Alanine 31, serine 45, and lysine 51 each carry phosphoserine. Residues 116–136 (AEKAADESERGMKVIESRAQK) are disordered. Residues serine 174, serine 186, and serine 206 each carry the phosphoserine modification. Lysine 213 carries the post-translational modification N6-acetyllysine. Phosphoserine is present on serine 252. Phosphotyrosine is present on tyrosine 261. Phosphoserine is present on serine 271. Serine 283 carries the post-translational modification Phosphoserine; by DAPK1.

It belongs to the tropomyosin family. In terms of assembly, homodimer. Heterodimer of an alpha (TPM1, TPM3 or TPM4) and a beta (TPM2) chain. Interacts with HRG (via the HRR domain); the interaction contributes to the antiangiogenic properties of the histidine/proline-rich region (HRR) of HRG. Interacts (via N-terminus) with LMOD2 (via N-terminus) and TMOD1 (via N-terminus). Phosphorylated at Ser-283 by DAPK1 in response to oxidative stress and this phosphorylation enhances stress fiber formation in endothelial cells. In terms of tissue distribution, detected in primary breast cancer tissues but undetectable in normal breast tissues in Sudanese patients. Isoform 1 is expressed in adult and fetal skeletal muscle and cardiac tissues, with higher expression levels in the cardiac tissues. Isoform 10 is expressed in adult and fetal cardiac tissues, but not in skeletal muscle.

It localises to the cytoplasm. It is found in the cytoskeleton. Its function is as follows. Binds to actin filaments in muscle and non-muscle cells. Plays a central role, in association with the troponin complex, in the calcium dependent regulation of vertebrate striated muscle contraction. Smooth muscle contraction is regulated by interaction with caldesmon. In non-muscle cells is implicated in stabilizing cytoskeleton actin filaments. This Homo sapiens (Human) protein is Tropomyosin alpha-1 chain (TPM1).